The primary structure comprises 553 residues: Replication factor C large subunit (553 aa).

An ATP-binding site is contributed by 50 to 57; the sequence is GGPGVGKT. A disordered region spans residues 438 to 553; that stretch reads GKRPGKPEAG…SKKQRTLFDF (116 aa). Basic and acidic residues predominate over residues 442 to 451; it reads GKPEAGEPRE. The span at 503–513 shows a compositional bias: low complexity; sequence EAPMAAAMPAA. Over residues 532 to 553 the composition is skewed to basic and acidic residues; sequence EPEKPPAAEDKCSKKQRTLFDF.

Belongs to the activator 1 small subunits family. RfcL subfamily. Heteromultimer composed of small subunits (RfcS) and large subunits (RfcL).

In terms of biological role, part of the RFC clamp loader complex which loads the PCNA sliding clamp onto DNA. In Methanocella arvoryzae (strain DSM 22066 / NBRC 105507 / MRE50), this protein is Replication factor C large subunit.